Reading from the N-terminus, the 436-residue chain is ATP-dependent protease ATPase subunit HslU (436 aa).

ATP contacts are provided by residues Ile18, 60–65 (GVGKTE), Asp249, Glu314, and Arg386.

Belongs to the ClpX chaperone family. HslU subfamily. A double ring-shaped homohexamer of HslV is capped on each side by a ring-shaped HslU homohexamer. The assembly of the HslU/HslV complex is dependent on binding of ATP.

It is found in the cytoplasm. Its function is as follows. ATPase subunit of a proteasome-like degradation complex; this subunit has chaperone activity. The binding of ATP and its subsequent hydrolysis by HslU are essential for unfolding of protein substrates subsequently hydrolyzed by HslV. HslU recognizes the N-terminal part of its protein substrates and unfolds these before they are guided to HslV for hydrolysis. The chain is ATP-dependent protease ATPase subunit HslU from Ruegeria sp. (strain TM1040) (Silicibacter sp.).